The primary structure comprises 153 residues: 6,7-dimethyl-8-ribityllumazine synthase 1 (153 aa).

Residues Phe-16, 47–49, and 76–78 contribute to the 5-amino-6-(D-ribitylamino)uracil site; these read ALE and MVI. 81 to 82 serves as a coordination point for (2S)-2-hydroxy-3-oxobutyl phosphate; it reads ET. Residue His-84 is the Proton donor of the active site. Position 109 (Asn-109) interacts with 5-amino-6-(D-ribitylamino)uracil. Residue Arg-123 coordinates (2S)-2-hydroxy-3-oxobutyl phosphate.

It belongs to the DMRL synthase family.

It catalyses the reaction (2S)-2-hydroxy-3-oxobutyl phosphate + 5-amino-6-(D-ribitylamino)uracil = 6,7-dimethyl-8-(1-D-ribityl)lumazine + phosphate + 2 H2O + H(+). It participates in cofactor biosynthesis; riboflavin biosynthesis; riboflavin from 2-hydroxy-3-oxobutyl phosphate and 5-amino-6-(D-ribitylamino)uracil: step 1/2. Catalyzes the formation of 6,7-dimethyl-8-ribityllumazine by condensation of 5-amino-6-(D-ribitylamino)uracil with 3,4-dihydroxy-2-butanone 4-phosphate. This is the penultimate step in the biosynthesis of riboflavin. The protein is 6,7-dimethyl-8-ribityllumazine synthase 1 of Rhizobium meliloti (strain 1021) (Ensifer meliloti).